Consider the following 88-residue polypeptide: MANSPQARKRARQAENRRQHNAAMRSMVRTYLKKVNAAIASGDQGSAQEAYNQAVSVLDKATRKGKFHPNKAARHKSRLNTKIKAMAA.

Disordered stretches follow at residues 1-23 (MANS…HNAA) and 69-88 (PNKA…AMAA). Over residues 69–81 (PNKAARHKSRLNT) the composition is skewed to basic residues.

The protein belongs to the bacterial ribosomal protein bS20 family.

Binds directly to 16S ribosomal RNA. This is Small ribosomal subunit protein bS20 from Alcanivorax borkumensis (strain ATCC 700651 / DSM 11573 / NCIMB 13689 / SK2).